The primary structure comprises 284 residues: MEMO1 family protein YN1551_0739 (284 aa).

Belongs to the MEMO1 family.

The polypeptide is MEMO1 family protein YN1551_0739 (Saccharolobus islandicus (strain Y.N.15.51 / Yellowstone #2) (Sulfolobus islandicus)).